Reading from the N-terminus, the 292-residue chain is MAFPPSAGFTWISKTHNDTYPTITAAKCKQHGRAVFVTGASKGIGRVTAVAFAQAGAPSLALGARSSLDAAETAVLDAAKSAGHPPPQVLKLTLDVADEQSVADAAARVERAFGRLDILVNNAGRVEKWVPLAETDPKSWWATWEVNLKGTYLMTRAMLPLLLKGGEKTIVNMNSIGAHLTRPGASAYQTGKLAMLRLTQFTCVEYAAQGVLAFAIHPGAVDTELASNLPEDTKAKLVDSPELCADTIVWLTQEKQSWLAGRYLSANWDVAELMARKEEILQGDKLKVKLVL.

NADP(+) is bound by residues valine 37, aspartate 95, asparagine 122, arginine 156, tyrosine 188, lysine 192, valine 221, and threonine 223. The active-site Proton donor is tyrosine 188. The active-site Lowers pKa of active site Tyr is lysine 192.

This sequence belongs to the short-chain dehydrogenases/reductases (SDR) family.

Its pathway is mycotoxin biosynthesis. In terms of biological role, short chain dehydrogenase; part of the gene cluster that mediates the biosynthesis of the mycotoxin citrinin, a hepato-nephrotoxic compound to humans due to inhibition of respiration complex III. The pathway begins with the synthesis of a keto-aldehyde intermediate by the citrinin PKS (pksCT) from successive condensations of 4 malonyl-CoA units, presumably with a simple acetyl-CoA starter unit. Release of the keto-aldehyde intermediate is consistent with the presence of the C-terminal reductive release domain. Mp11 collaborates with pksCT by catalyzing the hydrolysis of ACP-bound acyl intermediates to free the ACP from stalled intermediates. Mpl2 then catalyzes the oxidation of the C-12 methyl of the ketone intermediate to an alcohol intermediate which is further oxidized by the oxidoreductase mpl7 to produce a bisaldehyde intermediate. The fourth catalytic step is catalyzed by the mpl4 aldehyde dehydrogenase. The final transformation is the reduction of C-3 by mpl6 to provide the chemically stable citrinin nucleus. The sequence is that of Short chain dehydrogenase mpl6 from Monascus purpureus (Red mold).